The sequence spans 117 residues: Large ribosomal subunit protein bL20 (117 aa).

The protein belongs to the bacterial ribosomal protein bL20 family.

In terms of biological role, binds directly to 23S ribosomal RNA and is necessary for the in vitro assembly process of the 50S ribosomal subunit. It is not involved in the protein synthesizing functions of that subunit. This Oleidesulfovibrio alaskensis (strain ATCC BAA-1058 / DSM 17464 / G20) (Desulfovibrio alaskensis) protein is Large ribosomal subunit protein bL20.